A 156-amino-acid chain; its full sequence is ATP synthase subunit b (156 aa).

The helical transmembrane segment at leucine 5–valine 25 threads the bilayer.

The protein belongs to the ATPase B chain family. F-type ATPases have 2 components, F(1) - the catalytic core - and F(0) - the membrane proton channel. F(1) has five subunits: alpha(3), beta(3), gamma(1), delta(1), epsilon(1). F(0) has three main subunits: a(1), b(2) and c(10-14). The alpha and beta chains form an alternating ring which encloses part of the gamma chain. F(1) is attached to F(0) by a central stalk formed by the gamma and epsilon chains, while a peripheral stalk is formed by the delta and b chains.

The protein localises to the cell inner membrane. F(1)F(0) ATP synthase produces ATP from ADP in the presence of a proton or sodium gradient. F-type ATPases consist of two structural domains, F(1) containing the extramembraneous catalytic core and F(0) containing the membrane proton channel, linked together by a central stalk and a peripheral stalk. During catalysis, ATP synthesis in the catalytic domain of F(1) is coupled via a rotary mechanism of the central stalk subunits to proton translocation. In terms of biological role, component of the F(0) channel, it forms part of the peripheral stalk, linking F(1) to F(0). This is ATP synthase subunit b from Acinetobacter baylyi (strain ATCC 33305 / BD413 / ADP1).